A 400-amino-acid polypeptide reads, in one-letter code: Acetate kinase (400 aa).

A Mg(2+)-binding site is contributed by N10. An ATP-binding site is contributed by K17. Substrate is bound at residue R91. D150 serves as the catalytic Proton donor/acceptor. ATP contacts are provided by residues 210 to 214 (HLGNG), 285 to 287 (DCR), and 333 to 337 (GIGEN). Residue E387 participates in Mg(2+) binding.

Belongs to the acetokinase family. In terms of assembly, homodimer. Mg(2+) serves as cofactor. The cofactor is Mn(2+).

It is found in the cytoplasm. It carries out the reaction acetate + ATP = acetyl phosphate + ADP. It participates in metabolic intermediate biosynthesis; acetyl-CoA biosynthesis; acetyl-CoA from acetate: step 1/2. Its function is as follows. Catalyzes the formation of acetyl phosphate from acetate and ATP. Can also catalyze the reverse reaction. In Pectobacterium carotovorum subsp. carotovorum (strain PC1), this protein is Acetate kinase.